Here is a 492-residue protein sequence, read N- to C-terminus: Cytochrome P450 2B12 (492 aa).

Ser-129 is subject to Phosphoserine. Cys-437 contributes to the heme binding site.

The protein belongs to the cytochrome P450 family. Heme serves as cofactor. Preputial gland, but not in liver.

Its subcellular location is the endoplasmic reticulum membrane. The protein resides in the microsome membrane. It carries out the reaction an organic molecule + reduced [NADPH--hemoprotein reductase] + O2 = an alcohol + oxidized [NADPH--hemoprotein reductase] + H2O + H(+). Functionally, cytochromes P450 are a group of heme-thiolate monooxygenases. In liver microsomes, this enzyme is involved in an NADPH-dependent electron transport pathway. This isozyme seems responsible for metabolism of 2,2',4,4',5,5'-hexachlorobiphenyl. The polypeptide is Cytochrome P450 2B12 (Cyp2b12) (Rattus norvegicus (Rat)).